The primary structure comprises 69 residues: Large ribosomal subunit protein bL32c (69 aa).

This sequence belongs to the bacterial ribosomal protein bL32 family.

Its subcellular location is the plastid. The protein resides in the chloroplast. This is Large ribosomal subunit protein bL32c from Pelargonium hortorum (Common geranium).